Reading from the N-terminus, the 491-residue chain is MNDHQKNHATSQDDNTKSTPSKNSKHIKIKLWHFILVILGIILLTSIITVVSTILISHQKSGLNKEQRANLKKIEYVYQTLNKDYYKKQSSDKLTQSAIDGMVKELKDPYSEYMTAEETKQFNEGVSGDFVGIGAEMQKKNEQISVTSPMKDSPAEKAGIQPKDIVTQVNHHSVVGKPLDQVVKMVRGKKGTYVTLTIKRGSQEKDIKIKRDTIHVKSVEYEKKGNVGVLTINKFQSNTSGELKSAIIKAHKQGIRHIILDLRNNPGGLLDEAVKMANIFIDKGNTVVQLEKGKDKEELKTSNQALKQAKDMKVSILVNEGSASASEVFTGAMKDYHKAKVYGSKTFGKGIVQTIREFSDGSLIKYTEMKWLTPDGHYIHGKGIRPDVSISTPKYQSLNVIPDNKTYHQGEKDKNVKTMKIGLKALGYPIDNETNIFDEQLESAIKTFQQDNNLKVNGNFDKKTNDKFTEKLVEKANKKDTVLNDLLNKLK.

Residues 1–22 (MNDHQKNHATSQDDNTKSTPSK) are disordered. The span at 8–22 (HATSQDDNTKSTPSK) shows a compositional bias: polar residues. The chain crosses the membrane as a helical span at residues 31–51 (LWHFILVILGIILLTSIITVV). One can recognise a PDZ domain in the interval 119-201 (TKQFNEGVSG…TYVTLTIKRG (83 aa)). Residues Ser324, Asp335, and Lys349 each act as charge relay system in the active site.

It belongs to the peptidase S41A family.

The protein resides in the cell membrane. The chain is Probable CtpA-like serine protease from Staphylococcus epidermidis (strain ATCC 35984 / DSM 28319 / BCRC 17069 / CCUG 31568 / BM 3577 / RP62A).